We begin with the raw amino-acid sequence, 779 residues long: Acyl-CoA dehydrogenase family member 11 (779 aa).

Position 175 is an N6-acetyllysine (lysine 175). Serine 210 carries the post-translational modification Phosphoserine. A Phosphotyrosine modification is found at tyrosine 323. Residues lysine 368 and lysine 390 each carry the N6-succinyllysine modification. FAD is bound by residues phenylalanine 503–serine 513, serine 511–serine 513, tryptophan 537–serine 539, and serine 539. Residue serine 513 coordinates substrate. Substrate is bound at residue glycine 628–arginine 631. Residues arginine 656, glutamine 726, and glutamine 726–glycine 730 contribute to the FAD site. Position 754 (glycine 754) interacts with substrate. Residues proline 755 to glutamate 757 and glutamate 757 each bind FAD. N6-acetyllysine is present on lysine 765.

This sequence belongs to the acyl-CoA dehydrogenase family. Homodimer. It depends on FAD as a cofactor.

The protein localises to the peroxisome. The protein resides in the mitochondrion membrane. It catalyses the reaction a 2,3-saturated acyl-CoA + oxidized [electron-transfer flavoprotein] + H(+) = a (2E)-enoyl-CoA + reduced [electron-transfer flavoprotein]. The catalysed reaction is docosanoyl-CoA + oxidized [electron-transfer flavoprotein] + H(+) = (2E)-docosenoyl-CoA + reduced [electron-transfer flavoprotein]. It carries out the reaction tetracosanoyl-CoA + oxidized [electron-transfer flavoprotein] + H(+) = (2E)-tetracosenoyl-CoA + reduced [electron-transfer flavoprotein]. The enzyme catalyses eicosanoyl-CoA + oxidized [electron-transfer flavoprotein] + H(+) = (2E)-eicosenoyl-CoA + reduced [electron-transfer flavoprotein]. It catalyses the reaction hexacosanoyl-CoA + oxidized [electron-transfer flavoprotein] + H(+) = (2E)-hexacosenoyl-CoA + reduced [electron-transfer flavoprotein]. The catalysed reaction is tricosanoyl-CoA + oxidized [electron-transfer flavoprotein] + H(+) = (2E)-tricosenoyl-CoA + reduced [electron-transfer flavoprotein]. It functions in the pathway lipid metabolism; fatty acid beta-oxidation. Functionally, acyl-CoA dehydrogenase, that exhibits maximal activity towards saturated C22-CoA. Probably participates in beta-oxydation and energy production but could also play a role in the metabolism of specific fatty acids to control fatty acids composition of cellular lipids in brain. In Rattus norvegicus (Rat), this protein is Acyl-CoA dehydrogenase family member 11 (Acad11).